Consider the following 172-residue polypeptide: Small ribosomal subunit protein bS16 (172 aa).

A disordered region spans residues 125–172 (KKRKAKEEAEAKAAAEKAAEEAAAAEAAKAEEEAAKAEEADSAEESAE). 2 stretches are compositionally biased toward basic and acidic residues: residues 129 to 144 (AKEEAEAKAAAEKAAE) and 152 to 163 (AKAEEEAAKAEE).

Belongs to the bacterial ribosomal protein bS16 family.

The protein is Small ribosomal subunit protein bS16 of Corynebacterium aurimucosum (strain ATCC 700975 / DSM 44827 / CIP 107346 / CN-1) (Corynebacterium nigricans).